Consider the following 583-residue polypeptide: Long-chain-fatty-acid--AMP ligase FadD26 (583 aa).

This sequence belongs to the ATP-dependent AMP-binding enzyme family.

It catalyses the reaction holo-[(phenol)carboxyphthiodiolenone synthase] + a long-chain fatty acid + ATP = a long-chain fatty acyl-[(phenol)carboxyphthiodiolenone synthase] + AMP + diphosphate. The enzyme catalyses eicosanoate + holo-[(phenol)carboxyphthiodiolenone synthase] + ATP = icosanoyl-[(phenol)carboxyphthiodiolenone synthase] + AMP + diphosphate. It carries out the reaction holo-[(phenol)carboxyphthiodiolenone synthase] + docosanoate + ATP = docosanoyl-[(phenol)carboxyphthiodiolenone synthase] + AMP + diphosphate. It participates in lipid metabolism; fatty acid biosynthesis. Its function is as follows. Catalyzes the activation of long-chain fatty acids as acyl-adenylates (acyl-AMP), which are then transferred to the multifunctional polyketide synthase PpsA for further chain extension. Catalyzes the adenylation of the long-chain fatty acids eicosanoate (C20) or docosanoate (C22), and potentially the very-long-chain fatty acid lignocerate (C24). Involved in the biosynthesis of phthiocerol dimycocerosate (DIM A) and phthiodiolone dimycocerosate (DIM B). In Mycobacterium bovis (strain ATCC BAA-935 / AF2122/97), this protein is Long-chain-fatty-acid--AMP ligase FadD26 (fadD26).